Here is a 339-residue protein sequence, read N- to C-terminus: MIFIDACFRKETPYTPIWMMRQAGRYLSEYQESRKKAGSFLELCKNSDLATEVTLQPVEILGVDAAILFSDILVVPLEMGLNLEFIPKKGPHFLETITDLKSVESLKVGVYKQLNYVYDTISQTRQKLSKEKALIGFCGSPWTLATYMIEGEGSKSYAKSKKMLYSEPEVLKALLEKLSLELIEYLSLQIQAGVNAVMIFDSWASALEKEAYLEFSWDYLKKISKELKKRYAHIPVILFPKGIGAYLDSIDGEFDVFGVDWGTPLTAAKKILGGKYVLQGNLEPTRLYDKNALEEGVEKILKVMGNQGHIFNLGHGMLPDLPRENAKYLVQLVHAKTRR.

Residues 21-25 (RQAGR), Phe-40, Asp-71, Tyr-147, Ser-202, and His-315 contribute to the substrate site.

The protein belongs to the uroporphyrinogen decarboxylase family. In terms of assembly, homodimer.

It localises to the cytoplasm. The enzyme catalyses uroporphyrinogen III + 4 H(+) = coproporphyrinogen III + 4 CO2. The protein operates within porphyrin-containing compound metabolism; protoporphyrin-IX biosynthesis; coproporphyrinogen-III from 5-aminolevulinate: step 4/4. Catalyzes the decarboxylation of four acetate groups of uroporphyrinogen-III to yield coproporphyrinogen-III. The sequence is that of Uroporphyrinogen decarboxylase from Helicobacter pylori (strain J99 / ATCC 700824) (Campylobacter pylori J99).